The sequence spans 1035 residues: MFFNPYLSGARKPPNLVAKRSVAKTFLEIVPRGAMHDGQSGLIKHKTGRGAIMFYRDIKHVLENDMAWPCPLPAPPPSIEAFARRLMGPLKFHTYDQVDGVLTHDTQECLSPRYRHHITPSGNVLRFFGATEQGHSICVNVFGQRSYFYCEYADGDLLRDLLASVSDLVSEPRMAYALTITPVQKMSIYGYGTSPIPNLFRVSISNWSMAKKIGEYLLENGIPVYEIRVDPLTRLVIDKKMTTFGWCCVHRYEWRTHKSSTCDFEIDCDVADIMAVSDDTSWPVYRCLSFDIECMSASGGFPAAEQTDDIVIQISCVCYNTGGTGCEENTVFGTSGLHLFTIGSCAPLAGVDVYEFPSEYEMLLGFLIFFQRYSPCFVTGYNINSFDFKYILTRLEFVYKLSPGPYSKLPAQGRFSMYSPLKKFVTTTTTKVFISGTVVIDMYPVCMAKTSSPNYKLNTMAELYLKQQKEDMSYKDIPVKFISGCEGRAQVGKYCVQDAVLVKDLFNTINFHYEAGAIARLARIPMRRVIFDGQQIRIYTSLLDECACRDFIMPNHKGADNSSEPTDVSYQGATVFEPEVGYYSDPVVVFDFASLYPSIIMAHNLCYSTFVAPGGESPPESDVLTVELESGLSYRFVKNTVRNSVLSELLTKWVSQRRAVRETMRSCHDPVKRMLLDKEQLALKVTCNAFYGFTGVVNGMMPCLPIAASITRIGRDMLMRTSQFVEENFAEPCFLHNFFNREDYSGDPVAVKVIYGDTDSVFVCYRGVTAAALIERGPSLAHYITQCLFVDPIKLEFEKVFGSLMMICKKRYIGKIVGETELSMKGVDLVRKTSCEFVKNVTRDIIQLLFDDPEVSRAAVQLSRLTLDELKMQGVPPGFGRVIQRLSQARDELYTSRARVEELVLSSVLSKDVSLYKQSNLPHIAVIKRLAARSEELPVVGDRVFYVLTAPVDGRSSGVRNYEIAEDPTYVREHGVPIHADKYFDQVIKSVTNVLSPVFPPQTLRKDKFLLGILPHRIYLEPSFLPYCVKASEHC.

The protein belongs to the DNA polymerase type-B family.

The protein localises to the host nucleus. The enzyme catalyses DNA(n) + a 2'-deoxyribonucleoside 5'-triphosphate = DNA(n+1) + diphosphate. The polypeptide is DNA polymerase catalytic subunit (UL54) (Macaca mulatta (Rhesus macaque)).